An 835-amino-acid polypeptide reads, in one-letter code: Leucine--tRNA ligase (835 aa).

Residues 36 to 46 carry the 'HIGH' region motif; that stretch reads PYPSGKIHVGH. A 'KMSKS' region motif is present at residues 602-606; sequence KMSKS. Lys605 is an ATP binding site.

Belongs to the class-I aminoacyl-tRNA synthetase family.

Its subcellular location is the cytoplasm. The enzyme catalyses tRNA(Leu) + L-leucine + ATP = L-leucyl-tRNA(Leu) + AMP + diphosphate. This chain is Leucine--tRNA ligase, found in Rickettsia felis (strain ATCC VR-1525 / URRWXCal2) (Rickettsia azadi).